The chain runs to 1035 residues: Translation initiation factor IF-2 (1035 aa).

A compositionally biased stretch (basic and acidic residues) spans 56–66; it reads KDDKSNTDDNK. Disordered stretches follow at residues 56 to 80 and 114 to 402; these read KDDKSNTDDNKTASAHSVAQHSSEA and ANDA…VIKN. The segment covering 68 to 78 has biased composition (polar residues); that stretch reads ASAHSVAQHSS. Composition is skewed to basic and acidic residues over residues 114-137 and 146-200; these read ANDAKSQKKPEEKRKKNDFVRVET and LVRE…EIKD. Positions 219–228 are enriched in polar residues; it reads DSATNVNLNE. Residues 229–238 show a composition bias toward basic and acidic residues; it reads SIDKDKKTND. Polar residues predominate over residues 239-253; the sequence is NRQVSTDNSAVNNEE. Residues 259 to 315 are compositionally biased toward basic and acidic residues; the sequence is LNKKDMDKKNNNKKNEAKKNAEKKNEAKKNEKNDNKGGNAKKNEHRSPDMKKNDSNR. A compositionally biased stretch (polar residues) spans 316-325; sequence PQDANKQNSK. 2 stretches are compositionally biased toward basic and acidic residues: residues 327–347 and 354–385; these read AADKNREEGRTGSKKSLEIPK and QKEEFNSQRAERREYNKDAEKDSKRELRKEQP. The 170-residue stretch at 537-706 folds into the tr-type G domain; that stretch reads PRPPVVVVMG…LLAADMLELK (170 aa). Positions 546–553 are G1; sequence GHVDHGKT. 546–553 contacts GTP; it reads GHVDHGKT. Residues 571–575 are G2; that stretch reads GITQH. The segment at 592–595 is G3; sequence DTPG. Residues 592-596 and 646-649 contribute to the GTP site; these read DTPGH and NKID. A G4 region spans residues 646-649; sequence NKID. The interval 682-684 is G5; it reads SAK.

Belongs to the TRAFAC class translation factor GTPase superfamily. Classic translation factor GTPase family. IF-2 subfamily.

It localises to the cytoplasm. Functionally, one of the essential components for the initiation of protein synthesis. Protects formylmethionyl-tRNA from spontaneous hydrolysis and promotes its binding to the 30S ribosomal subunits. Also involved in the hydrolysis of GTP during the formation of the 70S ribosomal complex. The sequence is that of Translation initiation factor IF-2 from Acetivibrio thermocellus (strain ATCC 27405 / DSM 1237 / JCM 9322 / NBRC 103400 / NCIMB 10682 / NRRL B-4536 / VPI 7372) (Clostridium thermocellum).